The chain runs to 405 residues: Secreted aspartic protease 8 (405 aa).

The first 23 residues, 1 to 23 (MVSIITFTKNVLVTLAFALLAQG), serve as a signal peptide directing secretion. The propeptide at 24 to 75 (LAIPEDIDKRAEKVVSLDFTVTRKPFNATAHGQHHQSQQQQQQQQQQPAQKR) is activation peptide. The tract at residues 52–78 (TAHGQHHQSQQQQQQQQQQPAQKRGTV) is disordered. Residues 58–70 (HQSQQQQQQQQQQ) show a composition bias toward low complexity. Residues 89–392 (YAATITVGSN…DLDGNTISLA (304 aa)) form the Peptidase A1 domain. D107 is a catalytic residue. Residue 107–109 (DTG) participates in pepstatin A binding. A disulfide bond links C122 and C134. Pepstatin A-binding positions include 160-161 (ED) and 292-296 (DSGTT). Residue D292 is part of the active site. An intrachain disulfide couples C327 to C358.

This sequence belongs to the peptidase A1 family. Monomer.

The protein localises to the secreted. The enzyme catalyses Preferential cleavage at the carboxyl of hydrophobic amino acids, but fails to cleave 15-Leu-|-Tyr-16, 16-Tyr-|-Leu-17 and 24-Phe-|-Phe-25 of insulin B chain. Activates trypsinogen, and degrades keratin.. Its function is as follows. Secreted aspartic peptidases (SAPs) are a group of ten acidic hydrolases considered as key virulence factors. These enzymes supply the fungus with nutrient amino acids as well as are able to degrade the selected host's proteins involved in the immune defense. Moreover, acts toward human hemoglobin though limited proteolysis to generate a variety of antimicrobial hemocidins, enabling to compete with the other microorganisms of the same physiological niche using the microbicidal peptides generated from the host protein. In terms of biological role, plays a key role in defense against host by cleaving histatin-5 (Hst 5), a peptide from human saliva that carries out fungicidal activity. The cleavage rate decreases in an order of SAP2 &gt; SAP9 &gt; SAP3 &gt; SAP7 &gt; SAP4 &gt; SAP1 &gt; SAP8. The hydrolysis of Hst 5 by SAP8 causes production of the DSHAKRHHGY, HHSHRGY and FHEKHHSHRGY peptides. The protein is Secreted aspartic protease 8 of Candida albicans (strain SC5314 / ATCC MYA-2876) (Yeast).